The sequence spans 370 residues: UDP-N-acetylglucosamine--N-acetylmuramyl-(pentapeptide) pyrophosphoryl-undecaprenol N-acetylglucosamine transferase (370 aa).

UDP-N-acetyl-alpha-D-glucosamine is bound by residues 10-12 (TGG), Asn126, Ser200, Ile255, and Gln300.

It belongs to the glycosyltransferase 28 family. MurG subfamily.

The protein localises to the cell membrane. It carries out the reaction Mur2Ac(oyl-L-Ala-gamma-D-Glu-L-Lys-D-Ala-D-Ala)-di-trans,octa-cis-undecaprenyl diphosphate + UDP-N-acetyl-alpha-D-glucosamine = beta-D-GlcNAc-(1-&gt;4)-Mur2Ac(oyl-L-Ala-gamma-D-Glu-L-Lys-D-Ala-D-Ala)-di-trans,octa-cis-undecaprenyl diphosphate + UDP + H(+). The protein operates within cell wall biogenesis; peptidoglycan biosynthesis. Its function is as follows. Cell wall formation. Catalyzes the transfer of a GlcNAc subunit on undecaprenyl-pyrophosphoryl-MurNAc-pentapeptide (lipid intermediate I) to form undecaprenyl-pyrophosphoryl-MurNAc-(pentapeptide)GlcNAc (lipid intermediate II). This chain is UDP-N-acetylglucosamine--N-acetylmuramyl-(pentapeptide) pyrophosphoryl-undecaprenol N-acetylglucosamine transferase, found in Lactobacillus delbrueckii subsp. bulgaricus (strain ATCC 11842 / DSM 20081 / BCRC 10696 / JCM 1002 / NBRC 13953 / NCIMB 11778 / NCTC 12712 / WDCM 00102 / Lb 14).